Consider the following 439-residue polypeptide: Protein translocase subunit SecY (439 aa).

A run of 10 helical transmembrane segments spans residues 19–39 (ILFTIFILFVFRLGAHITVPG), 68–88 (YSLFAMGVSPYITASIIVQLL), 116–136 (YITLVLAMAQSIGITAGFQAM), 151–171 (LMIGAILTTGSMVVTWMGEQI), 176–196 (FGSGVSVIIFAGIVSSIPSAV), 216–236 (WLFVIGLVLSAIIIIYVTTFV), 269–289 (VIPVIFAGSITTAPATILQFL), 312–332 (WTGMLFYALLIVLFTFFYSFV), 373–393 (VGALFLGLISIIPIAAQNVWG), and 396–416 (KIVALGGTSLLILIQVAIQAV).

It belongs to the SecY/SEC61-alpha family. Component of the Sec protein translocase complex. Heterotrimer consisting of SecY, SecE and SecG subunits. The heterotrimers can form oligomers, although 1 heterotrimer is thought to be able to translocate proteins. Interacts with the ribosome. Interacts with SecDF, and other proteins may be involved. Interacts with SecA.

The protein localises to the cell membrane. The central subunit of the protein translocation channel SecYEG. Consists of two halves formed by TMs 1-5 and 6-10. These two domains form a lateral gate at the front which open onto the bilayer between TMs 2 and 7, and are clamped together by SecE at the back. The channel is closed by both a pore ring composed of hydrophobic SecY resides and a short helix (helix 2A) on the extracellular side of the membrane which forms a plug. The plug probably moves laterally to allow the channel to open. The ring and the pore may move independently. This is Protein translocase subunit SecY from Lactococcus lactis subsp. lactis (strain IL1403) (Streptococcus lactis).